The sequence spans 383 residues: Cell division protein FtsZ (383 aa).

GTP is bound by residues 20-24 (GGGGN), 107-109 (GTG), glutamate 138, arginine 142, and asparagine 186.

Belongs to the FtsZ family. In terms of assembly, homodimer. Polymerizes to form a dynamic ring structure in a strictly GTP-dependent manner. Interacts directly with several other division proteins.

It is found in the cytoplasm. Functionally, essential cell division protein that forms a contractile ring structure (Z ring) at the future cell division site. The regulation of the ring assembly controls the timing and the location of cell division. One of the functions of the FtsZ ring is to recruit other cell division proteins to the septum to produce a new cell wall between the dividing cells. Binds GTP and shows GTPase activity. The sequence is that of Cell division protein FtsZ from Shigella flexneri.